The primary structure comprises 621 residues: Chaperone protein HscA homolog (621 aa).

It belongs to the heat shock protein 70 family.

Functionally, chaperone involved in the maturation of iron-sulfur cluster-containing proteins. Has a low intrinsic ATPase activity which is markedly stimulated by HscB. The sequence is that of Chaperone protein HscA homolog from Pseudomonas fluorescens (strain Pf0-1).